We begin with the raw amino-acid sequence, 374 residues long: Peptidoglycan recognition protein 4 (374 aa).

Residues 1 to 20 (MLSWLLVFSILVLLAQGVSS) form the signal peptide. N-linked (GlcNAc...) asparagine glycosylation is found at Asn39, Asn93, and Asn146. N-acetylmuramoyl-L-alanine amidase domains lie at 76 to 212 (RPVD…KACP) and 233 to 359 (PAKY…LSPG). Intrachain disulfides connect Cys211–Cys333, Cys227–Cys271, and Cys247–Cys253. Residue Tyr275 coordinates peptidoglycan. Interaction with murein stretches follow at residues 294–303 (QGSKTDSYND) and 354–355 (NT).

Belongs to the N-acetylmuramoyl-L-alanine amidase 2 family. In terms of assembly, homodimer; disulfide-linked. Heterodimer with PGLYRP3; disulfide-linked. As to expression, ubiquitous.

The protein localises to the secreted. Functionally, pattern receptor that binds to murein peptidoglycans (PGN) of Gram-positive bacteria. Has bactericidal activity towards Gram-positive bacteria. May kill Gram-positive bacteria by interfering with peptidoglycan biosynthesis. Also binds to Gram-negative bacteria, and has bacteriostatic activity towards Gram-negative bacteria. Plays a role in innate immunity. In Mus musculus (Mouse), this protein is Peptidoglycan recognition protein 4 (Pglyrp4).